Consider the following 259-residue polypeptide: Peptide methionine sulfoxide reductase (259 aa).

Residues 66-90 (TRTPADASMDQSSIAQGPDDDIPAP) are disordered.

Belongs to the MsrA Met sulfoxide reductase family.

It catalyses the reaction L-methionyl-[protein] + [thioredoxin]-disulfide + H2O = L-methionyl-(S)-S-oxide-[protein] + [thioredoxin]-dithiol. It carries out the reaction [thioredoxin]-disulfide + L-methionine + H2O = L-methionine (S)-S-oxide + [thioredoxin]-dithiol. In terms of biological role, has an important function as a repair enzyme for proteins that have been inactivated by oxidation. Catalyzes the reversible oxidation-reduction of methionine sulfoxide in proteins to methionine. The polypeptide is Peptide methionine sulfoxide reductase (Lactuca sativa (Garden lettuce)).